Consider the following 316-residue polypeptide: Peroxisomal targeting signal 2 receptor (316 aa).

WD repeat units lie at residues 56-96 (DTRD…GGRP), 102-142 (EHTK…SLKT), 145-185 (EHRY…SLNT), 188-228 (AHDH…RPTT), 232-272 (GHTY…DPII), and 277-316 (HHTEFVVGLDWNMFIDGQMASCSWDEQVCVWNLGRPGQFR).

It belongs to the WD repeat peroxin-7 family. Interacts with PEX5; interaction only takes place when PEX7 is associated with cargo proteins.

The protein resides in the cytoplasm. Its subcellular location is the cytosol. It localises to the peroxisome matrix. In terms of biological role, receptor required for the peroxisomal import of proteins containing a C-terminal PTS2-type peroxisomal targeting signal. Specifically binds to cargo proteins containing a PTS2 peroxisomal targeting signal in the cytosol. Cargo protein-binding triggers interaction with PEX5 and formation of a ternary complex composed of PEX5 and PEX7 along with PTS2-containing cargo proteins, which is tranlocated into peroxisomes by passing through the PEX13-PEX14 docking complex. This is Peroxisomal targeting signal 2 receptor (pex7) from Dictyostelium discoideum (Social amoeba).